We begin with the raw amino-acid sequence, 295 residues long: Small ribosomal subunit protein uS2 (295 aa).

Residues 264–295 (KFSKTKNIDEETNTEFEQALNDTDENKNADNA) are disordered.

It belongs to the universal ribosomal protein uS2 family.

The sequence is that of Small ribosomal subunit protein uS2 from Rickettsia akari (strain Hartford).